The sequence spans 426 residues: Enolase (426 aa).

Gln163 is a binding site for (2R)-2-phosphoglycerate. Glu205 functions as the Proton donor in the catalytic mechanism. Mg(2+) contacts are provided by Asp242, Glu283, and Asp310. (2R)-2-phosphoglycerate is bound by residues Lys335, Arg364, Ser365, and Lys386. The active-site Proton acceptor is the Lys335.

It belongs to the enolase family. It depends on Mg(2+) as a cofactor.

Its subcellular location is the cytoplasm. The protein localises to the secreted. It localises to the cell surface. The enzyme catalyses (2R)-2-phosphoglycerate = phosphoenolpyruvate + H2O. Its pathway is carbohydrate degradation; glycolysis; pyruvate from D-glyceraldehyde 3-phosphate: step 4/5. Catalyzes the reversible conversion of 2-phosphoglycerate (2-PG) into phosphoenolpyruvate (PEP). It is essential for the degradation of carbohydrates via glycolysis. The chain is Enolase from Clavibacter sepedonicus (Clavibacter michiganensis subsp. sepedonicus).